Consider the following 73-residue polypeptide: Large ribosomal subunit protein bL31 (73 aa).

It belongs to the bacterial ribosomal protein bL31 family. Type A subfamily. As to quaternary structure, part of the 50S ribosomal subunit.

In terms of biological role, binds the 23S rRNA. This is Large ribosomal subunit protein bL31 from Rhizobium meliloti (strain 1021) (Ensifer meliloti).